We begin with the raw amino-acid sequence, 238 residues long: Ribonuclease PH (238 aa).

Phosphate-binding positions include Arg-86 and 124-126; that span reads GTR.

Belongs to the RNase PH family. Homohexameric ring arranged as a trimer of dimers.

The catalysed reaction is tRNA(n+1) + phosphate = tRNA(n) + a ribonucleoside 5'-diphosphate. Functionally, phosphorolytic 3'-5' exoribonuclease that plays an important role in tRNA 3'-end maturation. Removes nucleotide residues following the 3'-CCA terminus of tRNAs; can also add nucleotides to the ends of RNA molecules by using nucleoside diphosphates as substrates, but this may not be physiologically important. Probably plays a role in initiation of 16S rRNA degradation (leading to ribosome degradation) during starvation. The sequence is that of Ribonuclease PH from Brucella melitensis biotype 2 (strain ATCC 23457).